Consider the following 102-residue polypeptide: Omega-hexatoxin-Hi2a (102 aa).

A signal peptide spans 1–23 (MKFSKLSLTLALILTQALLVVCG). The propeptide occupies 24-56 (KINEDFMENGLESHALHDEIRKPIDTEKADAER). Disulfide bonds link Cys61–Cys75, Cys68–Cys81, and Cys74–Cys86. Leu98 carries the post-translational modification Leucine amide. A propeptide spanning residues 100–102 (RAL) is cleaved from the precursor.

The protein belongs to the neurotoxin 15 family. 02 (omega-actx) subfamily. As to expression, expressed by the venom gland.

It is found in the secreted. Its function is as follows. Potent inhibitor of insect, but not mammalian, voltage-gated calcium channels (Cav). The chain is Omega-hexatoxin-Hi2a from Hadronyche infensa (Fraser island funnel-web spider).